Reading from the N-terminus, the 769-residue chain is Neprilysin-21 (769 aa).

The Cytoplasmic portion of the chain corresponds to 1–26 (MKPENGAATWHPAKRSCLGRLTTLET). Residues 27 to 47 (LLLVFLGLLITALLSVLFLWL) traverse the membrane as a helical; Signal-anchor for type II membrane protein segment. Over 48–769 (WVLDGYKTFT…MNPERKCQVW (722 aa)) the chain is Extracellular. Residue N69 is glycosylated (N-linked (GlcNAc...) asparagine). Residues 85 to 769 (VCTSRECVRL…MNPERKCQVW (685 aa)) form the Peptidase M13 domain. 5 disulfides stabilise this stretch: C86/C91, C109/C754, C117/C714, C173/C428, and C638/C766. Residues N221, N240, N272, N307, N356, N412, and N506 are each glycosylated (N-linked (GlcNAc...) asparagine). Residue H601 coordinates Zn(2+). E602 is an active-site residue. Residues H605 and E663 each coordinate Zn(2+). Residue D667 is the Proton donor of the active site. N-linked (GlcNAc...) asparagine glycosylation is found at N684 and N698.

The protein belongs to the peptidase M13 family. It depends on Zn(2+) as a cofactor.

It localises to the cell membrane. Probable cell surface protease. The protein is Neprilysin-21 (nep-21) of Caenorhabditis elegans.